The chain runs to 304 residues: E3 ubiquitin-protein ligase RNF144B (304 aa).

Residues 27–245 (PLVTCKLCLC…YDRGPCRNKL (219 aa)) are TRIAD supradomain. The Zn(2+) site is built by cysteine 31, cysteine 34, cysteine 54, cysteine 57, cysteine 122, cysteine 127, cysteine 146, cysteine 149, cysteine 154, cysteine 157, histidine 162, cysteine 167, cysteine 194, and cysteine 197. Residues 31–81 (CKLCLCEQSLDKMTTLQECRCIFCTACLKQYMQLAIREGCGSPITCPDMVC) form an RING-type 1 zinc finger. The IBR-type zinc-finger motif lies at 102 to 167 (QLYQRLKFER…KDAWHAEVSC (66 aa)). The RING-type 2; atypical zinc-finger motif lies at 194-223 (CPVCRVYIERNEGCAQMMCKNCKHTFCWYC). The active site involves cysteine 207. Residues cysteine 212, cysteine 215, cysteine 220, cysteine 223, histidine 235, and cysteine 241 each coordinate Zn(2+). A helical membrane pass occupies residues 259 to 279 (VVGILVGLGIIALVTSPLLLL).

This sequence belongs to the RBR family. RNF144 subfamily. As to quaternary structure, interacts with UBE2L3, UBE2L6 and LCMT2, as well as with BAX. Interacts with TBK1; this interaction inhibits TBK1 phosphorylation and 'Lys-63'-linked polyubiquitination. In terms of processing, auto-ubiquitinated.

It is found in the mitochondrion membrane. It localises to the cytoplasm. The catalysed reaction is [E2 ubiquitin-conjugating enzyme]-S-ubiquitinyl-L-cysteine + [acceptor protein]-L-lysine = [E2 ubiquitin-conjugating enzyme]-L-cysteine + [acceptor protein]-N(6)-ubiquitinyl-L-lysine.. The protein operates within protein modification; protein ubiquitination. Functionally, E3 ubiquitin-protein ligase which accepts ubiquitin from E2 ubiquitin-conjugating enzymes UBE2L3 and UBE2L6 in the form of a thioester and then directly transfers the ubiquitin to targeted substrates such as LCMT2, thereby promoting their degradation. Induces apoptosis via a p53/TP53-dependent but caspase-independent mechanism. Plays a crucial role in maintaining the genomic stability by controlling the degradation of multiple proteins involved in mitotic progression and DNA damage. Regulates epithelial homeostasis by mediating degradation of CDKN1A and isoform 2 of TP63. Plays a regulatory role in innate immunity by negatively regulating IRF3 activation and IFN-beta production. Mechanistically, inhibits TBK1 phosphorylation and 'Lys-63'-linked polyubiquitination independently of its E3 ligase activity. Alternatively, promotes 'Lys-27' and 'Lys-33'-linked ubiquitination of IFIH1/MDA5, promoting selective autophagic degradation of IFIH1/MDA5 to inhibit antiviral response. The chain is E3 ubiquitin-protein ligase RNF144B (RNF144B) from Bos taurus (Bovine).